We begin with the raw amino-acid sequence, 245 residues long: Pyridoxine 5'-phosphate synthase (245 aa).

Position 7 (Asn7) interacts with 3-amino-2-oxopropyl phosphate. Position 9 to 10 (Asp9 to His10) interacts with 1-deoxy-D-xylulose 5-phosphate. Position 18 (Arg18) interacts with 3-amino-2-oxopropyl phosphate. His43 functions as the Proton acceptor in the catalytic mechanism. The 1-deoxy-D-xylulose 5-phosphate site is built by Arg45 and His50. Glu70 functions as the Proton acceptor in the catalytic mechanism. Thr100 is a binding site for 1-deoxy-D-xylulose 5-phosphate. The Proton donor role is filled by His190. Residues Gly191 and Gly212–His213 each bind 3-amino-2-oxopropyl phosphate.

The protein belongs to the PNP synthase family. Homooctamer; tetramer of dimers.

It localises to the cytoplasm. It catalyses the reaction 3-amino-2-oxopropyl phosphate + 1-deoxy-D-xylulose 5-phosphate = pyridoxine 5'-phosphate + phosphate + 2 H2O + H(+). It participates in cofactor biosynthesis; pyridoxine 5'-phosphate biosynthesis; pyridoxine 5'-phosphate from D-erythrose 4-phosphate: step 5/5. In terms of biological role, catalyzes the complicated ring closure reaction between the two acyclic compounds 1-deoxy-D-xylulose-5-phosphate (DXP) and 3-amino-2-oxopropyl phosphate (1-amino-acetone-3-phosphate or AAP) to form pyridoxine 5'-phosphate (PNP) and inorganic phosphate. This Prochlorococcus marinus (strain MIT 9303) protein is Pyridoxine 5'-phosphate synthase.